A 150-amino-acid chain; its full sequence is D-aminoacyl-tRNA deacylase (150 aa).

A Gly-cisPro motif, important for rejection of L-amino acids motif is present at residues 137–138; the sequence is GP.

Belongs to the DTD family. In terms of assembly, homodimer.

The protein localises to the cytoplasm. The catalysed reaction is glycyl-tRNA(Ala) + H2O = tRNA(Ala) + glycine + H(+). The enzyme catalyses a D-aminoacyl-tRNA + H2O = a tRNA + a D-alpha-amino acid + H(+). An aminoacyl-tRNA editing enzyme that deacylates mischarged D-aminoacyl-tRNAs. Also deacylates mischarged glycyl-tRNA(Ala), protecting cells against glycine mischarging by AlaRS. Acts via tRNA-based rather than protein-based catalysis; rejects L-amino acids rather than detecting D-amino acids in the active site. By recycling D-aminoacyl-tRNA to D-amino acids and free tRNA molecules, this enzyme counteracts the toxicity associated with the formation of D-aminoacyl-tRNA entities in vivo and helps enforce protein L-homochirality. This is D-aminoacyl-tRNA deacylase from Listeria innocua serovar 6a (strain ATCC BAA-680 / CLIP 11262).